We begin with the raw amino-acid sequence, 185 residues long: MAEEIKNVPEQEVPKVATEESSAEVTDRGLFDFLGKKKDETKPEETPIASEFEQKVHISEPEPEVKHESLLEKLHRSDSSSSSSSEEEGSDGEKRKKKKEKKKPTTEVEVKEEEKKGFMEKLKEKLPGHKKPEDGSAVAAAPVVVPPPVEEAHPVEKKGILEKIKEKLPGYHPKTTVEEEKKDKE.

4 stretches are compositionally biased toward basic and acidic residues: residues 1 to 13 (MAEE…EQEV), 25 to 45 (VTDR…KPEE), 52 to 78 (FEQK…HRSD), and 103 to 134 (KPTT…KPED). 2 disordered regions span residues 1 to 138 (MAEE…GSAV) and 166 to 185 (EKLP…KDKE). Position 2 is an N-acetylalanine (Ala-2). Ser-59 carries the phosphoserine modification. 2 consecutive repeat copies span residues 112-132 (EEEK…HKKP) and 154-174 (PVEK…YHPK). The 2 X 21 AA repeats, Lys-rich stretch occupies residues 112-174 (EEEKKGFMEK…KEKLPGYHPK (63 aa)).

Belongs to the plant dehydrin family. As to expression, in stems, cauline leaves, roots and flowers. Low levels found in maturing seeds. Absent in dry seeds.

Its function is as follows. Intrinsically disordered protein acting as a chaperone. Prevents heat-induced aggregation and/or inactivation of various substrates. Binds to acidic phospholipid vesicles without affecting membrane fluidity. In Arabidopsis thaliana (Mouse-ear cress), this protein is Dehydrin ERD14 (ERD14).